The following is a 586-amino-acid chain: Asparagine synthetase, nodule [glutamine-hydrolyzing] (586 aa).

Cys2 serves as the catalytic For GATase activity. The Glutamine amidotransferase type-2 domain maps to 2–185 (CGILAVLGCS…PGHLYSSKER (184 aa)). L-glutamine contacts are provided by residues 50–54 (RLAIV), 75–77 (NGE), and Asp98. The Asparagine synthetase domain maps to 193-517 (PPWFNEAIIP…PQNSARLTVP (325 aa)). Residues Leu232, Val268, and 342 to 343 (SG) contribute to the ATP site.

In terms of tissue distribution, root nodules.

The catalysed reaction is L-aspartate + L-glutamine + ATP + H2O = L-asparagine + L-glutamate + AMP + diphosphate + H(+). Its pathway is amino-acid biosynthesis; L-asparagine biosynthesis; L-asparagine from L-aspartate (L-Gln route): step 1/1. This Pisum sativum (Garden pea) protein is Asparagine synthetase, nodule [glutamine-hydrolyzing] (AS1).